The chain runs to 388 residues: Carbamoyl phosphate synthase small chain (388 aa).

Positions 1–198 (MSQDLLPGVT…WPEGYAKLDK (198 aa)) are CPSase. L-glutamine contacts are provided by S53, G250, and G252. Positions 202–388 (EVVVIDYGVK…RFAGLMDAAK (187 aa)) constitute a Glutamine amidotransferase type-1 domain. C279 acts as the Nucleophile in catalysis. Residues L280, Q283, N321, G323, and F324 each coordinate L-glutamine. Active-site residues include H363 and E365.

The protein belongs to the CarA family. In terms of assembly, composed of two chains; the small (or glutamine) chain promotes the hydrolysis of glutamine to ammonia, which is used by the large (or ammonia) chain to synthesize carbamoyl phosphate. Tetramer of heterodimers (alpha,beta)4.

The catalysed reaction is hydrogencarbonate + L-glutamine + 2 ATP + H2O = carbamoyl phosphate + L-glutamate + 2 ADP + phosphate + 2 H(+). It catalyses the reaction L-glutamine + H2O = L-glutamate + NH4(+). It participates in amino-acid biosynthesis; L-arginine biosynthesis; carbamoyl phosphate from bicarbonate: step 1/1. The protein operates within pyrimidine metabolism; UMP biosynthesis via de novo pathway; (S)-dihydroorotate from bicarbonate: step 1/3. In terms of biological role, small subunit of the glutamine-dependent carbamoyl phosphate synthetase (CPSase). CPSase catalyzes the formation of carbamoyl phosphate from the ammonia moiety of glutamine, carbonate, and phosphate donated by ATP, constituting the first step of 2 biosynthetic pathways, one leading to arginine and/or urea and the other to pyrimidine nucleotides. The small subunit (glutamine amidotransferase) binds and cleaves glutamine to supply the large subunit with the substrate ammonia. The sequence is that of Carbamoyl phosphate synthase small chain from Caulobacter vibrioides (strain ATCC 19089 / CIP 103742 / CB 15) (Caulobacter crescentus).